A 578-amino-acid polypeptide reads, in one-letter code: Adenine deaminase (578 aa).

This sequence belongs to the metallo-dependent hydrolases superfamily. Adenine deaminase family. Requires Mn(2+) as cofactor.

It catalyses the reaction adenine + H2O + H(+) = hypoxanthine + NH4(+). In Ligilactobacillus salivarius (strain UCC118) (Lactobacillus salivarius), this protein is Adenine deaminase.